The sequence spans 196 residues: MATSVLCCLRCCRDGGTGHIPLKEMPAVQLDTQHMGTDVVIVKNGRRICGTGGCLASAPLHQNKSYFEFKIQSTGIWGIGVATQKVNLNQIPLGRDMHSLVMRNDGALYHNNEEKNRLPANSLPQEGDVVGITYDHVELNVYLNGKNMHCPASGIRGTVYPVVYVDDSAILDCQFSEFYHTPPPGFEKILFEQQIF.

Alanine 2 carries the N-acetylalanine modification. The B30.2/SPRY domain maps to 2–184 (ATSVLCCLRC…FSEFYHTPPP (183 aa)).

The chain is SPRY domain-containing protein 7 (SPRYD7) from Homo sapiens (Human).